A 156-amino-acid polypeptide reads, in one-letter code: Ribosomal RNA large subunit methyltransferase H (156 aa).

Residues leucine 73, glycine 104, and 123 to 128 (LSALTL) contribute to the S-adenosyl-L-methionine site.

This sequence belongs to the RNA methyltransferase RlmH family. Homodimer.

Its subcellular location is the cytoplasm. The enzyme catalyses pseudouridine(1915) in 23S rRNA + S-adenosyl-L-methionine = N(3)-methylpseudouridine(1915) in 23S rRNA + S-adenosyl-L-homocysteine + H(+). Its function is as follows. Specifically methylates the pseudouridine at position 1915 (m3Psi1915) in 23S rRNA. The polypeptide is Ribosomal RNA large subunit methyltransferase H (Psychromonas ingrahamii (strain DSM 17664 / CCUG 51855 / 37)).